The following is a 273-amino-acid chain: Large ribosomal subunit protein uL2 (273 aa).

The interval 228 to 273 is disordered; the sequence is VDHPHGGGEGKTSGGRHPVTPWGFSTKGKKTRKNKRTSKFIVKKRK. Basic residues predominate over residues 254-273; the sequence is KGKKTRKNKRTSKFIVKKRK.

It belongs to the universal ribosomal protein uL2 family. In terms of assembly, part of the 50S ribosomal subunit. Forms a bridge to the 30S subunit in the 70S ribosome.

In terms of biological role, one of the primary rRNA binding proteins. Required for association of the 30S and 50S subunits to form the 70S ribosome, for tRNA binding and peptide bond formation. It has been suggested to have peptidyltransferase activity; this is somewhat controversial. Makes several contacts with the 16S rRNA in the 70S ribosome. The polypeptide is Large ribosomal subunit protein uL2 (Rickettsia prowazekii (strain Madrid E)).